The sequence spans 219 residues: Vesicle-associated membrane protein 711 (219 aa).

Alanine 2 carries the N-acetylalanine modification. Topologically, residues 2–189 (AILYALVARG…RSNVWWRNCK (188 aa)) are cytoplasmic. Residues 7–111 (LVARGTVVLS…AMNEEFSRVL (105 aa)) form the Longin domain. The v-SNARE coiled-coil homology domain maps to 126-186 (RINRIKGEMN…RRFRSNVWWR (61 aa)). The chain crosses the membrane as a helical; Anchor for type IV membrane protein span at residues 190-210 (LTVLLILLLLVIIYIAVAFLC). The Vesicular segment spans residues 211 to 219 (HGPTLPSCI).

This sequence belongs to the synaptobrevin family. In terms of tissue distribution, expressed in flowers, leaves, stems and roots.

The protein localises to the vacuole membrane. The protein resides in the prevacuolar compartment membrane. Functionally, involved in the targeting and/or fusion of transport vesicles to their target membrane. The chain is Vesicle-associated membrane protein 711 from Arabidopsis thaliana (Mouse-ear cress).